Reading from the N-terminus, the 285-residue chain is Dihydropteroate synthase (285 aa).

The Pterin-binding domain occupies 25-271; the sequence is TLVMGILNVT…DVKQIARMAK (247 aa). Asn-32 contacts Mg(2+). (7,8-dihydropterin-6-yl)methyl diphosphate-binding positions include Thr-72, Asp-106, Asn-125, Asp-189, Lys-225, and 259-261; that span reads RVH.

The protein belongs to the DHPS family. It depends on Mg(2+) as a cofactor.

It carries out the reaction (7,8-dihydropterin-6-yl)methyl diphosphate + 4-aminobenzoate = 7,8-dihydropteroate + diphosphate. Its pathway is cofactor biosynthesis; tetrahydrofolate biosynthesis; 7,8-dihydrofolate from 2-amino-4-hydroxy-6-hydroxymethyl-7,8-dihydropteridine diphosphate and 4-aminobenzoate: step 1/2. In terms of biological role, catalyzes the condensation of para-aminobenzoate (pABA) with 6-hydroxymethyl-7,8-dihydropterin diphosphate (DHPt-PP) to form 7,8-dihydropteroate (H2Pte), the immediate precursor of folate derivatives. This is Dihydropteroate synthase (sul) from Bacillus subtilis (strain 168).